Here is a 1216-residue protein sequence, read N- to C-terminus: MAAHSSLYNEDRNLLRIREKERRNQEAHQEKEAFPEKAPLFPEPYKTAKGDELSSRIQTMLGDYEEMKEFLSSKSHPHRLDGSEDRPGKPRYPLGHDRGNGAASSSLRTHVYHQPIHTSAPGSRPVGNISHSPKMAQPRMEPSLHTKIYDGPRLTQDHLSQGHCSRKCDRRAEGDSAPERKLSPLISSLPSPVPPLSPVHSRLQGTSKAHSSGVSSKSCCVAKSSKDLVAKAQDKETPHDGLVAVTSLGSAPPQPPCQTFPPPPLPSKSAAMQQKPTAYVRPMDGQDQAPSESPELKLPLEDYGQQSFEKPDLKVPAKAKLTRLRMPSQSVEQPYSNEVHCVEEILKEMTHSWPPPLTAIHTPSTAEPSRFPFPTKDPLHVSPATQSQKQYDTPSKTHPNPQQGTSMLEDDLQLSDSEDSDTEQATEKPPSPPAPPSAPQTLPEPVASAHSSSGESESSESDSSSDSESESSSSDSEEEEENEPLETRAPEPEPPTTNKWQLDNWLTKVNQPSVPLDGRGSTESPQWRQESKGVAEGSSDQQHPDSKDPLPKSSSKTLRGPSEGPSLGRGAVRNPPLNRNPHLGKPWAANNPGNPPRLRPGRAQASSQAESEVGPLPYGSKEQTSKDRPKVKTKGRPRAVGSREPKPEVPAPTPQAAVPRPKPPVPTPSEKRKHKSSTAPSKAPSAPQPPKDSAGDRNPEHSALVSLTQSQGPSHSSRGSSGSVRTSGCRQAVIAQGDGCKDKLLLPLRDTKLLSPLRDSPPPTSLVVKITLDLLTRIPQPLGKGSRPRKAEDKQLSAGKKQDSETKSCDSSSRVTKKRKVTQKKSTVTRDTNWISRRASSSSSHTESSRTKAPRSSSENSRKEMLPPASASSVSSSSSSQKPSRPAQKRPRPDEDTCSQEPPRSASSTKSSSTDPPAPKHRKVQARGSEHKGSSGDAANAANPFPVPSLPNGNAKPGKPQVKSDRQQADFHMKEAKKLKCKAETMVDKAGKAFKYLEAVLSFIECGMASESESSAKSAYAVYSETIDLIRYVMSLKCFSDNTMPAQEKIFAVLCLRCQSLLNMAMFRCKKDTVMKYSRTLSEHFKSTSKVAQAPSPCTARSTGVPSPLSPMPSPASSVGSQSSAGSSMGSVGVTATVSTPVSIQNMTSSYVTITSHVLTAFSLWEQAEALTRKNKEFFAQLSTKVRVLALNSSLVDLVHYTRQGLQRLKQSPKGP.

Disordered regions lie at residues 1–52 (MAAH…KGDE), 68–104 (KEFL…GAAS), 116–139 (IHTS…AQPR), 152–217 (PRLT…VSSK), 244–275 (AVTS…MQQK), and 352–728 (SWPP…RTSG). 2 stretches are compositionally biased toward basic and acidic residues: residues 9-35 (NEDR…EAFP) and 78-99 (HRLD…HDRG). Residues 166–182 (RKCDRRAEGDSAPERKL) show a composition bias toward basic and acidic residues. 3 positions are modified to phosphoserine: S183, S191, and S197. Positions 207–217 (SKAHSSGVSSK) are enriched in low complexity. Over residues 252–266 (PPQPPCQTFPPPPLP) the composition is skewed to pro residues. A compositionally biased stretch (polar residues) spans 383-406 (PATQSQKQYDTPSKTHPNPQQGTS). The span at 408 to 424 (LEDDLQLSDSEDSDTEQ) shows a compositional bias: acidic residues. The segment covering 429–438 (PPSPPAPPSA) has biased composition (pro residues). Residues 457–484 (ESSESDSSSDSESESSSSDSEEEEENEP) are compositionally biased toward acidic residues. K682 bears the N6-acetyllysine mark. The span at 710 to 728 (SQGPSHSSRGSSGSVRTSG) shows a compositional bias: low complexity. Residues S755 and S760 each carry the phosphoserine modification. 2 disordered regions span residues 777-969 (RIPQ…RQQA) and 1094-1125 (APSP…QSSA). Residues 789–808 (RKAEDKQLSAGKKQDSETKS) are compositionally biased toward basic and acidic residues. Composition is skewed to low complexity over residues 824-846 (KKST…SSHT), 867-886 (PPAS…PSRP), 902-915 (PPRS…SSTD), and 1115-1125 (PASSVGSQSSA).

Belongs to the AF4 family. Component of the super elongation complex (SEC), at least composed of EAF1, EAF2, CDK9, MLLT3/AF9, AFF (AFF1 or AFF4), the P-TEFb complex and ELL (ELL, ELL2 or ELL3).

It localises to the nucleus. This is AF4/FMR2 family member 1 (Aff1) from Mus musculus (Mouse).